A 119-amino-acid polypeptide reads, in one-letter code: MPRVKRGVTARARHKKVLKLAKGYYGARSRTYRVAKQAVTKAGQYAYRDRRQKKRQFRQLWIARINAASRQNGLSYSRFINGLKKASIEIDRKILADIAVFDKVVFTTLVEKAKEALAK.

It belongs to the bacterial ribosomal protein bL20 family.

Functionally, binds directly to 23S ribosomal RNA and is necessary for the in vitro assembly process of the 50S ribosomal subunit. It is not involved in the protein synthesizing functions of that subunit. The sequence is that of Large ribosomal subunit protein bL20 from Shewanella sediminis (strain HAW-EB3).